A 280-amino-acid polypeptide reads, in one-letter code: Large ribosomal subunit protein uL2 (280 aa).

2 disordered regions span residues 33 to 55 (LTEG…RRRG) and 224 to 266 (AMNP…KASQ). The span at 256–266 (TRTRNKNKASQ) shows a compositional bias: basic residues.

It belongs to the universal ribosomal protein uL2 family. Part of the 50S ribosomal subunit. Forms a bridge to the 30S subunit in the 70S ribosome.

Functionally, one of the primary rRNA binding proteins. Required for association of the 30S and 50S subunits to form the 70S ribosome, for tRNA binding and peptide bond formation. It has been suggested to have peptidyltransferase activity; this is somewhat controversial. Makes several contacts with the 16S rRNA in the 70S ribosome. This chain is Large ribosomal subunit protein uL2, found in Ruegeria pomeroyi (strain ATCC 700808 / DSM 15171 / DSS-3) (Silicibacter pomeroyi).